Consider the following 2149-residue polypeptide: Oxygen-regulated protein 1 (2149 aa).

Over residues methionine 1 to glutamine 20 the composition is skewed to polar residues. The disordered stretch occupies residues methionine 1–arginine 25. Positions lysine 36 to aspartate 118 constitute a Doublecortin 1 domain. Residues tryptophan 127–proline 148 form a disordered region. In terms of domain architecture, Doublecortin 2 spans arginine 152–aspartate 231. 3 disordered regions span residues valine 351 to serine 373, methionine 1435 to arginine 1456, and valine 1583 to leucine 1613. A compositionally biased stretch (polar residues) spans serine 1446 to arginine 1456.

In terms of assembly, interacts (via the doublecortin domains) with microtubules. Interacts with RP1L1. Interacts with MAK.

It localises to the cytoplasm. The protein localises to the cytoskeleton. The protein resides in the cilium axoneme. It is found in the cell projection. Its subcellular location is the cilium. It localises to the photoreceptor outer segment. Functionally, microtubule-associated protein regulating the stability and length of the microtubule-based axoneme of photoreceptors. Required for the differentiation of photoreceptor cells, it plays a role in the organization of the outer segment of rod and cone photoreceptors ensuring the correct orientation and higher-order stacking of outer segment disks along the photoreceptor axoneme. The protein is Oxygen-regulated protein 1 (RP1) of Saimiri boliviensis boliviensis (Bolivian squirrel monkey).